The primary structure comprises 293 residues: 4-diphosphocytidyl-2-C-methyl-D-erythritol kinase (293 aa).

Residue K23 is part of the active site. Residue 109 to 119 (PVAAGIGGGSA) participates in ATP binding. D151 is an active-site residue.

Belongs to the GHMP kinase family. IspE subfamily.

It catalyses the reaction 4-CDP-2-C-methyl-D-erythritol + ATP = 4-CDP-2-C-methyl-D-erythritol 2-phosphate + ADP + H(+). The protein operates within isoprenoid biosynthesis; isopentenyl diphosphate biosynthesis via DXP pathway; isopentenyl diphosphate from 1-deoxy-D-xylulose 5-phosphate: step 3/6. Functionally, catalyzes the phosphorylation of the position 2 hydroxy group of 4-diphosphocytidyl-2C-methyl-D-erythritol. This is 4-diphosphocytidyl-2-C-methyl-D-erythritol kinase from Rhizorhabdus wittichii (strain DSM 6014 / CCUG 31198 / JCM 15750 / NBRC 105917 / EY 4224 / RW1) (Sphingomonas wittichii).